Reading from the N-terminus, the 114-residue chain is Probable acid stress chaperone HdeA (114 aa).

Residues 1–26 (MIKALFNKNTALAAVAILALSGGAMA) form the signal peptide. C46 and C94 are oxidised to a cystine.

Belongs to the HdeA family.

It localises to the periplasm. In terms of biological role, required for optimal acid stress protection. Exhibits a chaperone-like activity only at low pH by suppressing non-specifically the aggregation of denaturated periplasmic proteins. Contributes to acid resistance. Not required for wild-type virulence in the BALB/c mouse model. This Brucella abortus (strain 2308) protein is Probable acid stress chaperone HdeA.